A 257-amino-acid polypeptide reads, in one-letter code: Probable enoyl-CoA hydratase echA8 (257 aa).

Belongs to the enoyl-CoA hydratase/isomerase family.

It catalyses the reaction a (3S)-3-hydroxyacyl-CoA = a (2E)-enoyl-CoA + H2O. The enzyme catalyses a 4-saturated-(3S)-3-hydroxyacyl-CoA = a (3E)-enoyl-CoA + H2O. Could possibly oxidize fatty acids using specific components. The polypeptide is Probable enoyl-CoA hydratase echA8 (echA8) (Mycobacterium tuberculosis (strain CDC 1551 / Oshkosh)).